The chain runs to 807 residues: MPKGPKQQPPEPEWIGDGESTSPTDKVVKKGKKDKKTKKTFFEELAVEDRQAGEEEKVLKEKEQQQQHQQQQQKKKRDTRKGRRKKDVDDDDGEEKELMERLKKLSVPASDEEEEAPAPVPRGGKKNKGGNVFAALIQDQSEEEEEEEKHPPKPAKPEKNRINKAVSQEQQPGPKGRKGKEEKSKGKAKPQNKFAALDDEEEQDEEEIKEKEPPKQGKEKAKKAEQMEYERQVASLKAANAAENDFSVSQAEMSSRQAMLENASDIKLEKFSISAHGKELFVNADLYIVAGRRYGLVGPNGKGKTTLLKHIANRALSIPPNIDVLLCEQEVVADETPAVQAVLRADTKRLKLLEEERRLQGQLEQGDDTAADRLEKVYEELRATGAAAAEAKARRILAGLGFDPEMQNRPTQKFSGGWRMRVSLARALFMEPTLLMLDEPTNHLDLNAVIWLNNYLQGWRKTLLIVSHDQGFLDDVCTDIIHLDAQRLHYYRGNYMTFKKMYQQKQKELLKQYEKQEKKLKELKAGGKSTKQAEKQTKEALTRKQQKCRRKNQDEESQEAPELLKRPKEYTVRFTFPDPPPLSPPVLGLHGVTFGYEGQKPLFKNLDFGIDMDSRICIVGPNGVGKSTLLLLLTGKLTPTRGEMRKNHRLKIGFFNQQYAEQLRMEETPTEYLQRGFNLPYQDARKCLGRFGLESHAHTIQICKLSGGQKARVVFAELACREPDVLILDEPTNNLDIESIDALGEAINEYKGAVIVVSHDARLITETNCQLWVVEEQSVSQIDGDFDDYKREVLEALGEVMVSRPRE.

Residues 1-227 (MPKGPKQQPP…KEKAKKAEQM (227 aa)) are disordered. The residue at position 22 (Ser22) is a Phosphoserine. The segment covering 29–39 (KKGKKDKKTKK) has biased composition (basic residues). Over residues 47–65 (VEDRQAGEEEKVLKEKEQQ) the composition is skewed to basic and acidic residues. Basic residues predominate over residues 73-85 (QKKKRDTRKGRRK). A Phosphoserine modification is found at Ser106. 2 positions are modified to phosphoserine; by CK2: Ser110 and Ser141. Residues 148–161 (EKHPPKPAKPEKNR) show a composition bias toward basic and acidic residues. Ser167 is subject to Phosphoserine. Residues 197-207 (LDDEEEQDEEE) show a composition bias toward acidic residues. The span at 208–227 (IKEKEPPKQGKEKAKKAEQM) shows a compositional bias: basic and acidic residues. Positions 266–510 (IKLEKFSISA…MYQQKQKELL (245 aa)) constitute an ABC transporter 1 domain. 298-305 (GPNGKGKT) lines the ATP pocket. The segment covering 521-542 (KELKAGGKSTKQAEKQTKEALT) has biased composition (basic and acidic residues). The segment at 521–564 (KELKAGGKSTKQAEKQTKEALTRKQQKCRRKNQDEESQEAPELL) is disordered. At Ser557 the chain carries Phosphoserine. Residues 587–802 (LGLHGVTFGY…VLEALGEVMV (216 aa)) enclose the ABC transporter 2 domain. 620–627 (GPNGVGKS) is a binding site for ATP.

This sequence belongs to the ABC transporter superfamily. ABCF family. EF3 subfamily. Interacts (via N-terminus) with EIF2S1; the interaction is independent of its phosphorylated status. Associates (via both ABC transporter domains) with the ribosomes. Phosphorylated at phosphoserine and phosphothreonine. Phosphorylation on Ser-110 and Ser-141 by CK2; inhibits association of EIF2 with ribosomes.

The protein resides in the cytoplasm. Its subcellular location is the nucleus. It localises to the nucleoplasm. It is found in the nucleus envelope. Required for efficient Cap- and IRES-mediated mRNA translation initiation. Not involved in the ribosome biogenesis. In Sus scrofa (Pig), this protein is ATP-binding cassette sub-family F member 1 (ABCF1).